An 815-amino-acid chain; its full sequence is Phosphate transporter PHO1-2 (815 aa).

Topologically, residues 1 to 421 (MVKFSREYEA…QQPRNTHMIT (421 aa)) are cytoplasmic. The SPX domain occupies 2–368 (VKFSREYEAS…EQQRATDLFS (367 aa)). Disordered stretches follow at residues 83-108 (SAGQ…STDK), 166-213 (RGLA…LELQ), and 242-266 (AGKK…GGGG). The segment covering 97 to 108 (PDRGELVRSTDK) has biased composition (basic and acidic residues). The span at 183–201 (PPSSVHGSSGRYLLSGLSS) shows a compositional bias: low complexity. Residues 202–213 (PQSMSDGSLELQ) are compositionally biased toward polar residues. Basic and acidic residues predominate over residues 243 to 254 (GKKDGKTKDGSG). Gly residues predominate over residues 255–266 (KGRGGGGGGGGG). A helical membrane pass occupies residues 422–442 (FLVGLFTGTFVSLFIIYAILA). At 443–458 (HVSGIFTSTGNSAYME) the chain is on the extracellular side. A helical membrane pass occupies residues 459-479 (IVYHVFSMFALISLHIFLYGC). Topologically, residues 480–508 (NLFMWKNTRINHNFIFDFSSNTALTHRDA) are cytoplasmic. The helical transmembrane segment at 509 to 529 (FLMSASIMCTVVAALVINLFL) threads the bilayer. Over 530 to 538 (KNAGVAYAN) the chain is Extracellular. Residues 539 to 559 (ALPGALLLLSTGVLFCPFDIF) form a helical membrane-spanning segment. Residues 560-686 (YRSTRYCFMR…VRFKYAATPT (127 aa)) are Cytoplasmic-facing. The region spanning 624 to 815 (TSGQQYKHLA…PLPFRELETD (192 aa)) is the EXS domain. The helical transmembrane segment at 687-707 (PFWVWMVIISSSGATIYQLYW) threads the bilayer. Topologically, residues 708-734 (DFVKDWGFLNPKSKNRWLRNELILKNK) are extracellular. The helical transmembrane segment at 735 to 751 (SIYYVSMMLNLALRLAW) threads the bilayer. The Cytoplasmic portion of the chain corresponds to 752–815 (TESVMKIHIG…PLPFRELETD (64 aa)).

Belongs to the SYG1 (TC 2.A.94) family. As to expression, specifically expressed in roots.

Its subcellular location is the cell membrane. Functionally, involved in the transfer of inorganic phosphate (Pi) from roots to shoots. This chain is Phosphate transporter PHO1-2 (PHO1-2), found in Oryza sativa subsp. japonica (Rice).